Reading from the N-terminus, the 54-residue chain is Large ribosomal subunit protein bL33B (54 aa).

The protein belongs to the bacterial ribosomal protein bL33 family.

This Myxococcus xanthus (strain DK1622) protein is Large ribosomal subunit protein bL33B.